A 413-amino-acid polypeptide reads, in one-letter code: Chemotactic signal transduction system substrate-binding protein BasB (413 aa).

Positions 1 to 31 are cleaved as a signal peptide; that stretch reads MHSTTRREWLGAIGATAATGLAGCAGVGGAG.

Its subcellular location is the cell membrane. Functionally, mediates chemotaxis towards five attractant amino acids (leucine, isoleucine, valine, methionine and cysteine). May function as a receptor that binds the amino acids and transduces a signal to BasT. Has probably no additional role in transport. In Halobacterium salinarum (strain ATCC 29341 / DSM 671 / R1), this protein is Chemotactic signal transduction system substrate-binding protein BasB (basB).